The primary structure comprises 198 residues: Small ribosomal subunit protein uS5 (198 aa).

The S5 DRBM domain occupies 46–109 (LEDDVLEISM…NNAKLNIFKV (64 aa)).

The protein belongs to the universal ribosomal protein uS5 family. In terms of assembly, part of the 30S ribosomal subunit. Contacts protein S4.

In terms of biological role, with S4 and S12 plays an important role in translational accuracy. This Archaeoglobus fulgidus (strain ATCC 49558 / DSM 4304 / JCM 9628 / NBRC 100126 / VC-16) protein is Small ribosomal subunit protein uS5.